A 247-amino-acid polypeptide reads, in one-letter code: ATP synthase subunit a, chloroplastic (247 aa).

Helical transmembrane passes span 38 to 58 (QVLI…IIAV), 95 to 115 (VPFI…GALL), 134 to 154 (INTT…AGLT), 199 to 219 (LVVV…VMFL), and 220 to 240 (GLFT…AYIG).

Belongs to the ATPase A chain family. In terms of assembly, F-type ATPases have 2 components, CF(1) - the catalytic core - and CF(0) - the membrane proton channel. CF(1) has five subunits: alpha(3), beta(3), gamma(1), delta(1), epsilon(1). CF(0) has four main subunits: a, b, b' and c.

It localises to the plastid. It is found in the chloroplast thylakoid membrane. Key component of the proton channel; it plays a direct role in the translocation of protons across the membrane. This Morus indica (Mulberry) protein is ATP synthase subunit a, chloroplastic.